The following is a 392-amino-acid chain: Olfactomedin-like protein 3 (392 aa).

Positions 1 to 21 are cleaved as a signal peptide; sequence MGPWRCLLLLPLLAAAPRAQQ. Positions 25 to 99 form a coiled coil; sequence MEYVERRLAL…REVDYLETQN (75 aa). Residues 132 to 388 enclose the Olfactomedin-like domain; the sequence is DCSDTIASVR…QIIYRMEMKK (257 aa). A disulfide bridge links C133 with C315. N-linked (GlcNAc...) asparagine glycans are attached at residues N175 and N235.

The protein belongs to the OLFML3 family.

Its subcellular location is the secreted. In terms of biological role, secreted scaffold protein that plays an essential role in dorsoventral patterning during early development. Stabilizes axial formation by restricting chordin (CHRD) activity on the dorsal side. Acts by facilitating the association between the tolloid proteases and their substrate chordin (CHRD), leading to enhance chordin (CHRD) degradation. The polypeptide is Olfactomedin-like protein 3 (OLFML3) (Gallus gallus (Chicken)).